A 125-amino-acid polypeptide reads, in one-letter code: uncharacterized protein (125 aa).

The helical transmembrane segment at 21–43 (KFSLIALVSFTALAIIVLYHNIS) threads the bilayer.

The protein localises to the membrane. This is an uncharacterized protein from Archaeoglobus fulgidus (strain ATCC 49558 / DSM 4304 / JCM 9628 / NBRC 100126 / VC-16).